The chain runs to 347 residues: Circulating cathodic antigen (347 aa).

Residues 76–109 are a coiled coil; it reads ICLAAENKQLEQLKIENKTLRNSLDEHQTALDMI. Residues 149–177 are disordered; it reads PGPKSVNTPSTNSIDSQSVSQKSNSGKVD. Over residues 153–174 the composition is skewed to polar residues; it reads SVNTPSTNSIDSQSVSQKSNSG. The stretch at 206 to 233 forms a coiled coil; it reads DAYATELEEELHRLRSENAGLREILMIS. A disordered region spans residues 303–332; it reads LYNIPNPSDDSSNSGTISGNHSDEDSDEDD. Residues 307-316 are compositionally biased toward low complexity; sequence PNPSDDSSNS.

It belongs to the SIKE family. In terms of processing, O-glycosylated.

Functionally, involved in protection of the schistosome gut. In Schistosoma mansoni (Blood fluke), this protein is Circulating cathodic antigen.